Reading from the N-terminus, the 145-residue chain is Lysozyme-like protein 4 (145 aa).

Positions 1–19 (MQLYLVLLLISYLLTPIGA) are cleaved as a signal peptide. Residues 20–145 (SILGRCVVAK…LDRWLDGCEL (126 aa)) form the C-type lysozyme domain. 4 cysteine pairs are disulfide-bonded: Cys-25–Cys-143, Cys-49–Cys-130, Cys-84–Cys-95, and Cys-91–Cys-109. Glu-54 is an active-site residue.

It belongs to the glycosyl hydrolase 22 family. Monomer. In terms of tissue distribution, expressed in the brain, lung, ovary, uterus and testis. In testis expressed in the germinal epithelium and on the maturing spermatozoa (at protein level).

The protein resides in the secreted. The protein localises to the cytoplasmic vesicle. It localises to the secretory vesicle. It is found in the acrosome. Its subcellular location is the cell projection. The protein resides in the cilium. The protein localises to the flagellum. Functionally, may be involved in fertilization. Has no detectable bacteriolytic and lysozyme activities in vitro. The polypeptide is Lysozyme-like protein 4 (Lyzl4) (Rattus norvegicus (Rat)).